The primary structure comprises 386 residues: Histidine decarboxylase (386 aa).

Histidine 120 contacts substrate. Lysine 233 is modified (N6-(pyridoxal phosphate)lysine).

The protein belongs to the group II decarboxylase family. Homotetramer. Pyridoxal 5'-phosphate is required as a cofactor.

The enzyme catalyses L-histidine + H(+) = histamine + CO2. The protein operates within siderophore biosynthesis; anguibactin biosynthesis. The protein is Histidine decarboxylase of Vibrio anguillarum (strain ATCC 68554 / 775) (Listonella anguillarum).